Here is a 184-residue protein sequence, read N- to C-terminus: Bacterial microcompartment shell protein PduT (184 aa).

2 consecutive BMC domains span residues 4–86 (AIGI…PAIS) and 96–182 (AVGI…RQMV). Cys-38 serves as a coordination point for [4Fe-4S] cluster.

This sequence belongs to the bacterial microcompartments protein family. As to quaternary structure, homotrimerizes to form a pseudohexamer with a large central pore, which is probably the binding site for the [4Fe-4S] center. Interacts with PduS. Originally suggested to be a homotetramer; this is incorrect. [4Fe-4S] cluster is required as a cofactor.

Its subcellular location is the bacterial microcompartment. The protein operates within polyol metabolism; 1,2-propanediol degradation. In terms of biological role, a minor shell protein of the bacterial microcompartment (BMC) dedicated to 1,2-propanediol (1,2-PD) degradation. Overexpression of this protein leads to cells with either deposits or having lamina-like structures in the cytoplasm. Not absolutely required to make artificial BMCs. May selectively transport specific metabolites. Functionally, expression of a cosmid containing the full 21-gene pdu operon in E.coli allows E.coli to grow on 1,2-propanediol (1,2-PD) with the appearance of bacterial microcompartments (BMC) in its cytoplasm. Its function is as follows. The 1,2-PD-specific bacterial microcompartment (BMC) concentrates low levels of 1,2-PD catabolic enzymes, concentrates volatile reaction intermediates thus enhancing pathway flux and keeps the level of toxic, mutagenic propionaldehyde low. In Citrobacter freundii, this protein is Bacterial microcompartment shell protein PduT.